A 413-amino-acid chain; its full sequence is Oxidoreductase vrtI (413 aa).

In terms of domain architecture, Fe2OG dioxygenase spans 235–341; the sequence is DAESLTTLSM…RYSIAYFLRA (107 aa). Residues His262, Asp264, and His319 each contribute to the Fe cation site. Arg332 contacts 2-oxoglutarate.

It belongs to the iron/ascorbate-dependent oxidoreductase family.

It functions in the pathway secondary metabolite biosynthesis; terpenoid biosynthesis. Its function is as follows. Oxidoreductase; part of the gene cluster that mediates the biosynthesis of viridicatumtoxin, a tetracycline-like fungal meroterpenoid with a unique, fused spirobicyclic ring system. The first step of the pathway is the production of the malonamoyl-CoA starter unit for the polyketide synthase vrtA. The aldolase vrtJ may be involved in the synthesis of the malonamate substrate for malonamoyl-CoA synthetase vrtB. The polyketide synthase vrtA then may utilize the malonamoyl-CoA starter unit, followed by sequential condensation of eight malonyl-CoA units to form the polyketide backbone. The cyclization of the last ring could be mediated by the lactamase-like protein vrtG. The proposed post-PKS tailoring steps are a hydroxylation at C5 catalyzed the cytochrome P450 monooxygenase vrtE, a hydroxylation at C12a catalyzed by VrtH and/or VrtI, and an O-methylation by the O-methyltransferase vrtF. VrtC is then proposed to catalyze the transfer of a geranyl group synthesized by vrtD to the aromatic C ring of the tetracyclic polyketide intermediate of viridicatumtoxin to yield previridicatumtoxin. Finally, the cytochrome P450 monooxygenase vrtK catalyzes the spirocyclization of the geranyl moiety of previridicatumtoxin to afford viridicatumtoxin. This chain is Oxidoreductase vrtI, found in Penicillium aethiopicum.